Consider the following 352-residue polypeptide: Alanine racemase (352 aa).

Lys-33 serves as the catalytic Proton acceptor; specific for D-alanine. Lys-33 bears the N6-(pyridoxal phosphate)lysine mark. Residue Arg-129 participates in substrate binding. Tyr-250 (proton acceptor; specific for L-alanine) is an active-site residue. Met-298 serves as a coordination point for substrate.

The protein belongs to the alanine racemase family. It depends on pyridoxal 5'-phosphate as a cofactor.

It catalyses the reaction L-alanine = D-alanine. Its pathway is amino-acid biosynthesis; D-alanine biosynthesis; D-alanine from L-alanine: step 1/1. Its function is as follows. Catalyzes the interconversion of L-alanine and D-alanine. May also act on other amino acids. The sequence is that of Alanine racemase (alr) from Neisseria meningitidis serogroup A / serotype 4A (strain DSM 15465 / Z2491).